Consider the following 271-residue polypeptide: Regulatory protein RecX (271 aa).

It belongs to the RecX family.

The protein localises to the cytoplasm. In terms of biological role, modulates RecA activity. This Lactobacillus gasseri (strain ATCC 33323 / DSM 20243 / BCRC 14619 / CIP 102991 / JCM 1131 / KCTC 3163 / NCIMB 11718 / NCTC 13722 / AM63) protein is Regulatory protein RecX.